Consider the following 103-residue polypeptide: Small ribosomal subunit protein uS10 (103 aa).

This sequence belongs to the universal ribosomal protein uS10 family. Part of the 30S ribosomal subunit.

Its function is as follows. Involved in the binding of tRNA to the ribosomes. The protein is Small ribosomal subunit protein uS10 of Pseudoalteromonas translucida (strain TAC 125).